Reading from the N-terminus, the 455-residue chain is SUN domain-containing protein 2 (455 aa).

Over residues 1–12 (MSASTVSITASP) the composition is skewed to polar residues. Residues 1–99 (MSASTVSITA…RTRKSQGNKI (99 aa)) are disordered. S2 carries the post-translational modification N-acetylserine. The Nuclear portion of the chain corresponds to 2 to 105 (SASTVSITAS…GNKIDRGKWK (104 aa)). S63 carries the post-translational modification Phosphoserine. The span at 74–88 (KSGSTATGTNTTTTQ) shows a compositional bias: low complexity. Residues 88-95 (QRRTRKSQ) carry the Nuclear localization signal motif. A helical transmembrane segment spans residues 106-128 (TVVRVFAKQFGALLLLVGLIQLI). Residues 129 to 455 (RKLTLKDSSL…ELDSVSVAHA (327 aa)) lie on the Perinuclear space side of the membrane. Residues 201–225 (LHSELKKVESKTERLQVSVDELNAK) are a coiled coil. Residues 285–447 (GGAFVMGHSD…YRFRVHGREL (163 aa)) enclose the SUN domain.

In terms of assembly, forms homomers (e.g. dimers, trimers and tetramers) and heteromers with SUN1. Interacts with SUN3, SUN4 and TIK. Core component of the LINC complex which is composed of inner nuclear membrane SUN domain-containing proteins coupled to outer nuclear membrane WIP and WIT proteins. The LINC complex also involves nucleoskeletal proteins CRWN/LINC and possibly KAKU4 and the cytoskeletal myosin KAKU1. Interacts with LINC1, WIP1, WIP2 and WIP3 at the nuclear envelope (NE). Interacts with SINE1, SINE2, SINE3 and SINE4. Interacts with NEAP1, NEA2 and NEAP3. In terms of tissue distribution, expressed in roots, hypocotyls, cotyledons and leaves and inflorescences.

The protein localises to the nucleus inner membrane. It is found in the cytoplasm. It localises to the cytoskeleton. The protein resides in the phragmoplast. Its subcellular location is the endoplasmic reticulum membrane. The protein localises to the nucleus envelope. Functionally, component of SUN-protein-containing multivariate complexes also called LINC complexes which link the nucleoskeleton and cytoskeleton by providing versatile outer nuclear membrane attachment sites for cytoskeletal filaments. Required for the maintenance and/or formation of polarized nuclear shape in root hairs. Modulates the anchoring and mobility of WIP proteins in the nuclear envelope (NE). In association with SUN1, may be involved in telomere attachment to nuclear envelope in the prophase of meiosis. As component of the SUN-WIP-WIT2-KAKU1 complex, mediates the transfer of cytoplasmic forces to the nuclear envelope (NE), leading to nuclear shape changes. The sequence is that of SUN domain-containing protein 2 from Arabidopsis thaliana (Mouse-ear cress).